Here is a 345-residue protein sequence, read N- to C-terminus: Protein GAMETE CELL DEFECTIVE 1, mitochondrial (345 aa).

The transit peptide at methionine 1–glycine 43 directs the protein to the mitochondrion. The disordered stretch occupies residues leucine 36–proline 82.

The protein resides in the mitochondrion. In terms of biological role, essential for fertility (male and female gametophyte functions and development). Required for the integrity of female gametic mitochondria. Involved in embryo apical-basal patterning, and particularly dorsal-ventral patterning, during early embryogenesis, and endosperm free nucleus positioning and development as well as early endosperm development, probably by modulating the expression pattern of related genes (e.g. AL1, MYB3/AL2, CYP78A13/GE, PNH1, HAZ1, MPK6 and OSH1). Has function in triggering of endosperm programmed cell death (PCD) leading to syncytial endosperm cellularization and starchy endosperm cell maturation. Implicated in central vacuole dynamics necessary for microspore development leading to pollen production, and for pollen development and germination. This is Protein GAMETE CELL DEFECTIVE 1, mitochondrial from Oryza sativa subsp. indica (Rice).